Reading from the N-terminus, the 67-residue chain is Non-specific lipid-transfer protein 2P (67 aa).

4 disulfide bridges follow: cysteine 2/cysteine 34, cysteine 10/cysteine 24, cysteine 25/cysteine 60, and cysteine 36/cysteine 67.

Transfer lipids across membranes. May play a role in plant defense or in the biosynthesis of cuticle layers. This Triticum aestivum (Wheat) protein is Non-specific lipid-transfer protein 2P.